The primary structure comprises 257 residues: 8-demethyl-8-aminoriboflavin-5'-phosphate synthase (257 aa).

FMN-binding positions include 11–13 (TLR), 19–21 (SQT), 91–94 (ITLN), 132–136 (CGNED), and tyrosine 240.

The protein belongs to the SsuE family. Homotetramer.

It catalyses the reaction FMN + L-glutamate + 3 A + O2 + H2O = 8-amino-8-demethylriboflavin 5'-phosphate + 2-oxoglutarate + 3 AH2 + CO2 + H(+). Its pathway is antibiotic biosynthesis. Functionally, involved in the biosynthesis of the riboflavin analog antibiotic roseoflavin (3,8-dimethylamino-riboflavin). Catalyzes the site-specific substitution of the C-8 methyl group of riboflavin-5'-phosphate (FMN) by an amino group to yield 8-amino-8-demethylriboflavin 5'-phosphate, via a combined oxidation, decarboxylation and transamination reaction. The catalysis is initiated by an oxidation step in which the C-8 methyl group on the dimethylbenzene ring of FMN is converted to a formyl group to yield the 8-demethyl-8-formylriboflavin-5'-phosphate (OHC-RP) intermediate. In the presence of thiamine, the formyl group is oxidized into a carboxyl group to yield the 8-demethyl-8-carboxyriboflavin-5'-phosphate (HO2C-RP) intermediate. Finally, in the presence of L-glutamate as an amino donor, decarboxylation and aminotransfer occur, resulting in production of 8-demethyl-8-aminoriboflavin-5'-phosphate. Addition of NAD (but not NADP) to the reaction increases the yield 1.7-fold. The reaction also proceeds without the addition of any electron acceptor, and it is possible that molecular oxygen serves this role. In Streptomyces davaonensis (strain DSM 101723 / JCM 4913 / KCC S-0913 / 768), this protein is 8-demethyl-8-aminoriboflavin-5'-phosphate synthase.